The following is a 313-amino-acid chain: Dihydroorotate dehydrogenase B (NAD(+)), catalytic subunit (313 aa).

FMN is bound by residues S21 and 45–46; that span reads KA. Residues K45 and 69–73 each bind substrate; that span reads NAIGL. 2 residues coordinate FMN: N99 and N127. N127 contributes to the substrate binding site. C130 serves as the catalytic Nucleophile. 2 residues coordinate FMN: K165 and I191. Position 192-193 (192-193) interacts with substrate; the sequence is NT. Residues G217, 243–244, and 265–266 each bind FMN; these read GG and GT.

This sequence belongs to the dihydroorotate dehydrogenase family. Type 1 subfamily. As to quaternary structure, heterotetramer of 2 PyrK and 2 PyrD type B subunits. FMN is required as a cofactor.

It localises to the cytoplasm. It carries out the reaction (S)-dihydroorotate + NAD(+) = orotate + NADH + H(+). It functions in the pathway pyrimidine metabolism; UMP biosynthesis via de novo pathway; orotate from (S)-dihydroorotate (NAD(+) route): step 1/1. Functionally, catalyzes the conversion of dihydroorotate to orotate with NAD(+) as electron acceptor. In Geobacillus kaustophilus (strain HTA426), this protein is Dihydroorotate dehydrogenase B (NAD(+)), catalytic subunit (pyrD).